The primary structure comprises 421 residues: WD repeat and SOCS box-containing protein 1 (421 aa).

6 WD repeats span residues 32–71 (KCGRENWTVAFAPDGSYFAWSQGHRTVKLVPWSQCLQNFL), 124–165 (SRCV…LLLN), 168–208 (DHTE…NMMK), 212–251 (GHQNWVYSCAFSPDSSMLCSVGASKAVFLWNMDKYTMIRK), 254–293 (GHHHDVVACDFSPDGALLATASYDTRVYIWDPHNGDILME), and 309–346 (ANDRWVRSVSFSHDGLHVASLADDKMVRFWRIDEDYPV). The region spanning 372–421 (DGSVYFWATPRQVPSLQHLCRMSIRRVMPTQEVQELPIPSKLLEFLSYRI) is the SOCS box domain.

Interacts with DIO2. Component of the probable ECS(WSB1) E3 ubiquitin ligase complex which contains CUL5, RNF7/RBX2, Elongin BC complex and WSB1. Component of a probable ECS-like E3 ubiquitin-protein ligase complex which contains CUL5, RBX1, Elongin BC complex and WSB1. Interacts with CUL5, RNF7, ELOB and ELOC. Binds to HIPK2 through WD40 repeats.

The protein operates within protein modification; protein ubiquitination. Functionally, probable substrate-recognition component of a SCF-like ECS (Elongin-Cullin-SOCS-box protein) E3 ubiquitin ligase complex which mediates the ubiquitination and subsequent proteasomal degradation of target proteins. Recognizes type II iodothyronine deiodinase/DIO2. Confers constitutive instability to HIPK2 through proteasomal degradation. The protein is WD repeat and SOCS box-containing protein 1 (WSB1) of Homo sapiens (Human).